The chain runs to 376 residues: Mitochondrial distribution and morphology protein 34 (376 aa).

An SMP-LTD domain is found at 1 to 194; that stretch reads MSFTFNWPRF…LPGIIHRLSQ (194 aa). Disordered stretches follow at residues 207–249 and 286–376; these read SKHP…PKIV and SVPP…LHPS. Over residues 218 to 230 the composition is skewed to acidic residues; sequence EISEPGDYGEEGE. Residues 306 to 318 show a composition bias toward basic residues; that stretch reads VKAKRKRTYRLGG. Positions 350-362 are enriched in basic and acidic residues; that stretch reads MDRYFRSYDDHSR.

This sequence belongs to the MDM34 family. As to quaternary structure, component of the ER-mitochondria encounter structure (ERMES) or MDM complex, composed of MMM1, MDM10, MDM12 and MDM34.

The protein localises to the mitochondrion outer membrane. Component of the ERMES/MDM complex, which serves as a molecular tether to connect the endoplasmic reticulum (ER) and mitochondria. Components of this complex are involved in the control of mitochondrial shape and protein biogenesis, and function in nonvesicular lipid trafficking between the ER and mitochondria. MDM34 is required for the interaction of the ER-resident membrane protein MMM1 and the outer mitochondrial membrane-resident beta-barrel protein MDM10. This is Mitochondrial distribution and morphology protein 34 from Laccaria bicolor (strain S238N-H82 / ATCC MYA-4686) (Bicoloured deceiver).